The following is a 70-amino-acid chain: Envelope small membrane protein (70 aa).

The N-myristoyl glycine; by host moiety is linked to residue G2. Positions 2–15 (GSLWSKISQLFVDA) are endoplasmic reticulum retention signal. The Virion surface segment spans residues 2–25 (GSLWSKISQLFVDAFTEFLVSVVD). The chain crosses the membrane as a helical span at residues 26 to 46 (IAIFLAILFGFTVAGWLLVFL). Topologically, residues 47–70 (LRVVCSALLRSRSAIHSPELSKVL) are intravirion.

The protein belongs to the arteriviridae E protein family. Homooligomer. Associates with itself into higher-order structures, including dimers, trimers and tetramers. Associates with the GP2a-GP3-GP4 complex. In terms of processing, myristoylated. Not glycosylated.

It is found in the virion membrane. It localises to the host endoplasmic reticulum membrane. Its subcellular location is the host Golgi apparatus membrane. The protein localises to the secreted. In terms of biological role, minor envelope protein. May function as a viroporin in the virion envelope that facilitates uncoating of the virus in order to release the genomic RNA into the cytoplasm for subsequent replication. This Sus scrofa (Pig) protein is Envelope small membrane protein (GP2b).